We begin with the raw amino-acid sequence, 486 residues long: Ribulose bisphosphate carboxylase large chain 1 (486 aa).

Positions 125 and 175 each coordinate substrate. The Proton acceptor role is filled by lysine 177. Position 179 (lysine 179) interacts with substrate. Mg(2+) is bound by residues lysine 203, aspartate 205, and glutamate 206. N6-carboxylysine is present on lysine 203. The Proton acceptor role is filled by histidine 295. Substrate-binding residues include arginine 296, histidine 328, and serine 380.

This sequence belongs to the RuBisCO large chain family. Type I subfamily. As to quaternary structure, heterohexadecamer of 8 large chains and 8 small chains. Mg(2+) is required as a cofactor.

The enzyme catalyses 2 (2R)-3-phosphoglycerate + 2 H(+) = D-ribulose 1,5-bisphosphate + CO2 + H2O. The catalysed reaction is D-ribulose 1,5-bisphosphate + O2 = 2-phosphoglycolate + (2R)-3-phosphoglycerate + 2 H(+). In terms of biological role, ruBisCO catalyzes two reactions: the carboxylation of D-ribulose 1,5-bisphosphate, the primary event in carbon dioxide fixation, as well as the oxidative fragmentation of the pentose substrate. Both reactions occur simultaneously and in competition at the same active site. The protein is Ribulose bisphosphate carboxylase large chain 1 of Cereibacter sphaeroides (strain ATCC 17025 / ATH 2.4.3) (Rhodobacter sphaeroides).